The following is a 182-amino-acid chain: Ribosome maturation factor RimM (182 aa).

A PRC barrel domain is found at 99–176; it reads DDEYYHADLI…ELPAEIEGDT (78 aa).

This sequence belongs to the RimM family. In terms of assembly, binds ribosomal protein uS19.

The protein localises to the cytoplasm. Its function is as follows. An accessory protein needed during the final step in the assembly of 30S ribosomal subunit, possibly for assembly of the head region. Essential for efficient processing of 16S rRNA. May be needed both before and after RbfA during the maturation of 16S rRNA. It has affinity for free ribosomal 30S subunits but not for 70S ribosomes. This Rhodopseudomonas palustris (strain HaA2) protein is Ribosome maturation factor RimM.